The following is a 473-amino-acid chain: Cannabinoid receptor 1 (473 aa).

Residues 1–118 lie on the Extracellular side of the membrane; sequence MKSILDGLAD…CFMILTASQQ (118 aa). The interval 2–23 is required for mitochondrial localization; sequence KSILDGLADTTFRTITTDLLYM. N79 and N85 each carry an N-linked (GlcNAc...) asparagine glycan. A helical membrane pass occupies residues 119-144; that stretch reads LIIAVLSLTLGTFTVLENFLVLCVIL. Residues 145 to 156 are Cytoplasmic-facing; it reads QSRTLRCRPSYH. A helical transmembrane segment spans residues 157–177; sequence FIGSLAVADLLGSVIFVYSFL. The Extracellular segment spans residues 178 to 189; it reads DFHVFHRKDSSN. A helical transmembrane segment spans residues 190-214; that stretch reads VFLFKLGGVTASFTASVGSLFLTAI. The Cytoplasmic segment spans residues 215–234; it reads DRYISIHRPLAYKRIVTRTK. Residues 235 to 257 form a helical membrane-spanning segment; that stretch reads AVIAFCVMWTIAIIIAVLPLLGW. Residues 258–275 lie on the Extracellular side of the membrane; it reads NCKKLKSVCSDIFPLIDE. The helical transmembrane segment at 276 to 301 threads the bilayer; sequence NYLMFWIGVTSILLLFIVYAYVYILW. Residues 302–346 lie on the Cytoplasmic side of the membrane; sequence KAHSHAVRMLQRGTQKSIIIHTSEDGKVQITRPEQTRMDIRLAKT. A helical transmembrane segment spans residues 347–367; the sequence is LVLILVVLIICWGPLLAIMVY. The Extracellular portion of the chain corresponds to 368 to 379; that stretch reads DVFGKMNNPIKT. Residues 380–401 form a helical membrane-spanning segment; the sequence is VFAFCSMLCLMDSTVNPIIYAL. Residues 402 to 473 lie on the Cytoplasmic side of the membrane; that stretch reads RSQDLRHAFL…VSTETSGEAV (72 aa). The S-palmitoyl cysteine moiety is linked to residue C417.

The protein belongs to the G-protein coupled receptor 1 family. In terms of processing, palmitoylation at Cys-417 is important for recruitment at both plasma membrane and lipid rafts and association with G protein alpha subunits.

It is found in the cell membrane. Its subcellular location is the mitochondrion outer membrane. The protein localises to the cell projection. It localises to the axon. The protein resides in the presynapse. Hemopressin, a peptide derived from hemoglobin subunit alpha (HBA1 and/or HBA2), acts as an antagonist peptide: hemopressin-binding efficiently blocks cannabinoid receptor CNR1 and subsequent signaling. G-protein coupled receptor for cannabinoids. Mediates many cannabinoid-induced effects in the central nervous system (CNS), as well as in peripheral tissues. Regulates cellular respiration and energy production in response to cannabinoids. Signaling typically involves reduction in cyclic AMP. The protein is Cannabinoid receptor 1 (CNR1) of Taricha granulosa (Roughskin newt).